Consider the following 191-residue polypeptide: Ankyrin repeat domain-containing protein 22 (191 aa).

4 ANK repeats span residues 39–68 (NGDT…DVNL), 72–100 (KERT…MPVL), 101–130 (LIGY…EVNA), and 134–163 (DGYT…DPMI).

The chain is Ankyrin repeat domain-containing protein 22 (Ankrd22) from Mus musculus (Mouse).